The sequence spans 537 residues: Oviduct-specific glycoprotein (537 aa).

A signal peptide spans 1–18; the sequence is LLLCVGLLLVLKHHDGAA. Positions 19 to 382 constitute a GH18 domain; the sequence is HKLVCYFTNW…HTLNNLLVND (364 aa). The cysteines at positions 23 and 48 are disulfide-linked. Chitin is bound by residues 68 to 69, 95 to 98, Y139, 208 to 211, and W352; these read PQ, GGWN, and LSYD. N399 carries N-linked (GlcNAc...) asparagine glycosylation. 2 disordered regions span residues 446–475 and 498–537; these read EIAT…GEKP and TGQK…ERRL. Positions 528 to 537 are enriched in basic and acidic residues; it reads GRAETLERRL.

It belongs to the glycosyl hydrolase 18 family. As to expression, oviduct.

It localises to the cytoplasmic vesicle. It is found in the secretory vesicle. In terms of biological role, binds to oocyte zona pellucida in vivo. May play a role in the fertilization process and/or early embryonic development. The protein is Oviduct-specific glycoprotein (OVGP1) of Bos taurus (Bovine).